Reading from the N-terminus, the 94-residue chain is Pyrimidine/purine nucleoside phosphorylase (94 aa).

It belongs to the nucleoside phosphorylase PpnP family.

The catalysed reaction is a purine D-ribonucleoside + phosphate = a purine nucleobase + alpha-D-ribose 1-phosphate. The enzyme catalyses adenosine + phosphate = alpha-D-ribose 1-phosphate + adenine. It catalyses the reaction cytidine + phosphate = cytosine + alpha-D-ribose 1-phosphate. It carries out the reaction guanosine + phosphate = alpha-D-ribose 1-phosphate + guanine. The catalysed reaction is inosine + phosphate = alpha-D-ribose 1-phosphate + hypoxanthine. The enzyme catalyses thymidine + phosphate = 2-deoxy-alpha-D-ribose 1-phosphate + thymine. It catalyses the reaction uridine + phosphate = alpha-D-ribose 1-phosphate + uracil. It carries out the reaction xanthosine + phosphate = alpha-D-ribose 1-phosphate + xanthine. Catalyzes the phosphorolysis of diverse nucleosides, yielding D-ribose 1-phosphate and the respective free bases. Can use uridine, adenosine, guanosine, cytidine, thymidine, inosine and xanthosine as substrates. Also catalyzes the reverse reactions. In Alcanivorax borkumensis (strain ATCC 700651 / DSM 11573 / NCIMB 13689 / SK2), this protein is Pyrimidine/purine nucleoside phosphorylase.